The primary structure comprises 134 residues: Histone-like protein Rv3852 (134 aa).

Residues 1–10 (MPDPQDRPDS) are compositionally biased toward basic and acidic residues. The segment at 1–68 (MPDPQDRPDS…PAEAPVSLQQ (68 aa)) is disordered. Basic residues predominate over residues 23 to 48 (LPAKKAAKKAPARKTPAKKAPAKKTP). Residues 111-128 (PVPLIVAVTLSLLALLLI) traverse the membrane as a helical segment.

In terms of assembly, homodimer in solution. Is probably able to self-associate in higher oligomers along the DNA molecules. Interacts with the N-terminal region of Wag31.

It is found in the cell inner membrane. Can interact directly in vitro with the compound agrimophol, a phloroglucinol from the A.pilosa plant, whose extracts have been used in traditional Chinese medicine to treat pulmonary infections. Interaction with agrimophol leads to disruption of Rv3852's DNA binding function. Functionally, binds DNA in vitro. It has been proposed that Rv3852 plays a role in nucleoid organization and may function as an anchorage to tether the DNA to the membrane. However, it was later shown that it has no influence on nucleoid shape or compaction. It plays no role in virulence and only a minor role in the control of transcription, and does not appear to function as a typical nucleoid-associated protein. In terms of biological role, interacts with Wag31, an important cell shape and cell wall integrity determinant, and facilitates the localization of Wag31 to the cell poles and the cell wall, thus enabling nascent peptidoglycan synthesis. This chain is Histone-like protein Rv3852, found in Mycobacterium tuberculosis (strain ATCC 25618 / H37Rv).